We begin with the raw amino-acid sequence, 381 residues long: uncharacterized protein (381 aa).

The N-terminal stretch at 1 to 16 (MQTLLFYFFFINLIFA) is a signal peptide. At 17-303 (HDLNVKTYKP…KILENSPCPN (287 aa)) the chain is on the lumenal side. Cysteine 118 and cysteine 149 are disulfide-bonded. N-linked (GlcNAc...) asparagine glycans are attached at residues asparagine 133, asparagine 192, asparagine 225, asparagine 243, asparagine 246, and asparagine 287. A helical membrane pass occupies residues 304–324 (QPSIQPFGILMMLVSTIYGNF). The Cytoplasmic segment spans residues 325–359 (KNLYNCIKRNTIGYIYNSIYDFWITEGMLFPMRNM). The helical transmembrane segment at 360–380 (DIFKITAISIGLSIPVFLWLL) threads the bilayer. Position 381 (lysine 381) is a topological domain, lumenal.

The protein belongs to the calreticulin family.

The protein resides in the endoplasmic reticulum membrane. This is an uncharacterized protein from Schizosaccharomyces pombe (strain 972 / ATCC 24843) (Fission yeast).